A 493-amino-acid polypeptide reads, in one-letter code: Glutamate--tRNA ligase (493 aa).

The short motif at 10 to 20 (PSPTGDPHVGT) is the 'HIGH' region element. Residues 251-255 (KLSKR) carry the 'KMSKS' region motif. Lys-254 contributes to the ATP binding site.

It belongs to the class-I aminoacyl-tRNA synthetase family. Glutamate--tRNA ligase type 1 subfamily. As to quaternary structure, monomer.

The protein localises to the cytoplasm. The catalysed reaction is tRNA(Glu) + L-glutamate + ATP = L-glutamyl-tRNA(Glu) + AMP + diphosphate. Its function is as follows. Catalyzes the attachment of glutamate to tRNA(Glu) in a two-step reaction: glutamate is first activated by ATP to form Glu-AMP and then transferred to the acceptor end of tRNA(Glu). The sequence is that of Glutamate--tRNA ligase from Pseudomonas putida (strain ATCC 47054 / DSM 6125 / CFBP 8728 / NCIMB 11950 / KT2440).